A 91-amino-acid polypeptide reads, in one-letter code: MSTSAQVPGGPAAQMKRRNNAQRQEAKASQRPTSTRSVGAGGSSSTMLKLYTDESQGLKVDPVVVMVLSLGFIFSVVALHILAKVSTKLLG.

The segment at 1–45 (MSTSAQVPGGPAAQMKRRNNAQRQEAKASQRPTSTRSVGAGGSSS) is disordered. Residues 1–62 (MSTSAQVPGG…DESQGLKVDP (62 aa)) are Cytoplasmic-facing. The segment covering 30–45 (QRPTSTRSVGAGGSSS) has biased composition (polar residues). Residues 63-83 (VVVMVLSLGFIFSVVALHILA) form a helical membrane-spanning segment.

Belongs to the SEC61-beta family. In terms of assembly, heterotrimeric complex composed of SEC61, SEB1 and SSS1.

The protein localises to the endoplasmic reticulum membrane. Necessary for protein translocation in the endoplasmic reticulum. The sequence is that of Protein transport protein Sec61 subunit beta (SBH1) from Yarrowia lipolytica (strain CLIB 122 / E 150) (Yeast).